The chain runs to 410 residues: Argininosuccinate synthase (410 aa).

ATP-binding positions include 11 to 19 (AYSGGLDTS) and A37. 2 residues coordinate L-citrulline: Y88 and S93. 116-124 (SHGCTGKGN) serves as a coordination point for ATP. T120, N124, and D125 together coordinate L-aspartate. N124 is a binding site for L-citrulline. L-citrulline-binding residues include R128, S181, S190, E269, and Y281.

This sequence belongs to the argininosuccinate synthase family. Type 1 subfamily. As to quaternary structure, homotetramer.

It is found in the cytoplasm. The catalysed reaction is L-citrulline + L-aspartate + ATP = 2-(N(omega)-L-arginino)succinate + AMP + diphosphate + H(+). Its pathway is amino-acid biosynthesis; L-arginine biosynthesis; L-arginine from L-ornithine and carbamoyl phosphate: step 2/3. The chain is Argininosuccinate synthase (arg12) from Schizosaccharomyces pombe (strain 972 / ATCC 24843) (Fission yeast).